A 201-amino-acid chain; its full sequence is MACGATLKRTLDFDPLLSPASPKRRRCAPLSAPASAAASPAAATAAAAASAAAASPQKYLRMEPSPFGDVSSRLTTEQILYNIKQEYKRMQKRRHLEASFQQADPGCTSDSQPHAFLISGPASPGTSSATSSPLKKEQPLFTLRQVGMICERLLKEREEKVREEYEEILNTKLAEQYDAFVKFTHDQIMRRYGEQPASYVS.

2 positions are modified to phosphoserine: serine 18 and serine 21. The Nuclear localization signal signature appears at 23–28 (KRRRCA). Serine 55 is modified (phosphoserine). Positions 198 to 201 (SYVS) match the SYVS motif motif.

It belongs to the akirin family. In terms of assembly, homodimer. Interacts with IPO9; the interaction is direct. Associates with 20S and 26S proteasomes. Interacts with SMARCD1; promoting SWI/SNF complex recruitment. Interacts with NFKBIZ. Interacts with YWHAB. In terms of processing, polyubiquitinated. Polyubiquitination is dependent of UBR5 that extends pre-ubiquitinated AKIRIN2.

The protein localises to the nucleus. The protein resides in the cytoplasm. It is found in the membrane. In terms of biological role, molecular adapter that acts as a bridge between a variety of multiprotein complexes, and which is involved in embryonic development, immunity, myogenesis and brain development. Plays a key role in nuclear protein degradation by promoting import of proteasomes into the nucleus: directly binds to fully assembled 20S proteasomes at one end and to nuclear import receptor IPO9 at the other end, bridging them together and mediating the import of pre-assembled proteasome complexes through the nuclear pore. Involved in innate immunity by regulating the production of interleukin-6 (IL6) downstream of Toll-like receptor (TLR): acts by bridging the NF-kappa-B inhibitor NFKBIZ and the SWI/SNF complex, leading to promote induction of IL6. Also involved in adaptive immunity by promoting B-cell activation. Involved in brain development: required for the survival and proliferation of cerebral cortical progenitor cells. Involved in myogenesis: required for skeletal muscle formation and skeletal development, possibly by regulating expression of muscle differentiation factors. Also plays a role in facilitating interdigital tissue regression during limb development. In Mus musculus (Mouse), this protein is Akirin-2.